Reading from the N-terminus, the 93-residue chain is Probable chloroethene reductive dehalogenase membrane anchor protein (93 aa).

A run of 3 helical transmembrane segments spans residues 3 to 23, 35 to 55, and 64 to 84; these read AIYFFLTIALAVGLTMLFTWF, WVLGILGLLLALFAIQHTYAS, and SAWIVGVIVLLLAVVPLLFAA.

It belongs to the PceB family.

It is found in the cell membrane. May act as a membrane anchor for the chloroethene reductive dehalogenase VcrA. The polypeptide is Probable chloroethene reductive dehalogenase membrane anchor protein (Dehalococcoides mccartyi (strain VS)).